We begin with the raw amino-acid sequence, 229 residues long: Peptide methionine sulfoxide reductase B3, chloroplastic (229 aa).

Residues 1 to 71 (MGVQHLLKLR…NHNQWAASRC (71 aa)) constitute a chloroplast transit peptide. Positions 102-223 (EEEWEAILSP…NSISLKFIPA (122 aa)) constitute a MsrB domain. Positions 141, 144, 187, and 190 each coordinate Zn(2+). A disulfide bond links Cys159 and Cys212. Residue Cys212 is the Nucleophile of the active site.

The protein belongs to the MsrB Met sulfoxide reductase family. It depends on Zn(2+) as a cofactor.

The protein resides in the plastid. Its subcellular location is the chloroplast. It catalyses the reaction L-methionyl-[protein] + [thioredoxin]-disulfide + H2O = L-methionyl-(R)-S-oxide-[protein] + [thioredoxin]-dithiol. Functionally, catalyzes the reduction of methionine sulfoxide (MetSO) to methionine in proteins. Plays a protective role against oxidative stress by restoring activity to proteins that have been inactivated by methionine oxidation. MSRB family specifically reduces the MetSO R-enantiomer. The polypeptide is Peptide methionine sulfoxide reductase B3, chloroplastic (MSRB3) (Oryza sativa subsp. japonica (Rice)).